Consider the following 299-residue polypeptide: S-formylglutathione hydrolase (299 aa).

The Cu cation site is built by Met1 and His140. Catalysis depends on charge relay system residues Ser161, Asp241, and His276.

Belongs to the esterase D family. In terms of assembly, monomer.

It is found in the cytoplasm. The enzyme catalyses S-formylglutathione + H2O = formate + glutathione + H(+). Its function is as follows. Serine hydrolase involved in the detoxification of formaldehyde. This Saccharomyces cerevisiae (strain ATCC 204508 / S288c) (Baker's yeast) protein is S-formylglutathione hydrolase.